The sequence spans 192 residues: Ion-translocating oxidoreductase complex subunit A (192 aa).

6 helical membrane passes run 5 to 25 (LLLLISTVLVNNFVLVKFLGL), 39 to 59 (IGMSMATTFVLTLASILSYLV), 65 to 85 (LPFDLGYLRTMSFILVIAVVV), 102 to 122 (ALGIYLPLITTNCAVLGVALL), 134 to 154 (AIYGFGAAVGFSLVLILFSAM), and 171 to 191 (AIAMITAGLMSLAFMGFTGLV).

It belongs to the NqrDE/RnfAE family. As to quaternary structure, the complex is composed of six subunits: RnfA, RnfB, RnfC, RnfD, RnfE and RnfG.

The protein localises to the cell inner membrane. Its function is as follows. Part of a membrane-bound complex that couples electron transfer with translocation of ions across the membrane. This Shewanella sp. (strain MR-4) protein is Ion-translocating oxidoreductase complex subunit A.